The sequence spans 520 residues: Amphoterin-induced protein 2 (520 aa).

A signal peptide spans 1-37 (MSLRFHTLPTLPRAVKPGCRELLCLLVIAVMVSPSSS). In terms of domain architecture, LRRNT spans 38 to 67 (GLCPTACICATDIVSCTNKNLSKVPGNLFR). Residues 38 to 398 (GLCPTACICA…SHHAHEAFNT (361 aa)) are Extracellular-facing. Cystine bridges form between Cys-40/Cys-46 and Cys-44/Cys-53. Residue Asn-57 is glycosylated (N-linked (GlcNAc...) asparagine). LRR repeat units lie at residues 68-89 (LIKR…WIPV), 93-114 (KLST…SFST), 117-138 (NLKC…MFQE), 141-162 (VLEV…AFGG), 165-186 (HLQK…LYVG), and 192-213 (DLTF…HINL). N-linked (GlcNAc...) asparagine glycosylation occurs at Asn-103. The region spanning 227–283 (NPFVCDCSLYSLLTFWYRRHFNSVTDFKHDYTCRLWLDSRHSHQLLLLQDSFLNCSH) is the LRRCT domain. Disulfide bonds link Cys-231/Cys-259 and Cys-233/Cys-281. Asn-280, Asn-287, Asn-344, Asn-372, Asn-380, Asn-383, and Asn-387 each carry an N-linked (GlcNAc...) asparagine glycan. The Ig-like C2-type domain occupies 288-378 (GSFHALGFIH…RLLNETVDIM (91 aa)). Cys-309 and Cys-362 are disulfide-bonded. Residues 399-419 (AFTTLAACVVSIVLVLLYLYL) traverse the membrane as a helical segment. Residues 420 to 520 (TPCPCKCRDK…FSDTPFVAST (101 aa)) are Cytoplasmic-facing. Disordered regions lie at residues 437-458 (QSNA…AEDR) and 498-520 (SRAK…VAST).

The protein belongs to the immunoglobulin superfamily. AMIGO family. As to quaternary structure, binds itself as well as AMIGO1 and AMIGO3. In terms of tissue distribution, highest levels in the lung. High levels in cerebellar granule neurons and Purkinje cells. Also in pyramidal cells between CA1 and CA3 regions of the hippocampus and granule cells of the dentate gyrus.

The protein localises to the cell membrane. The protein resides in the nucleus. Required for depolarization-dependent survival of cultured cerebellar granule neurons. May mediate homophilic as well as heterophilic cell-cell interaction with AMIGO1 or AMIGO3. May contribute to signal transduction through its intracellular domain. The polypeptide is Amphoterin-induced protein 2 (Rattus norvegicus (Rat)).